Here is a 331-residue protein sequence, read N- to C-terminus: Inositol 2-dehydrogenase (331 aa).

Belongs to the Gfo/Idh/MocA family. Homotetramer.

The enzyme catalyses myo-inositol + NAD(+) = scyllo-inosose + NADH + H(+). Functionally, involved in the oxidation of myo-inositol (MI) to 2-keto-myo-inositol (2KMI or 2-inosose). The chain is Inositol 2-dehydrogenase from Renibacterium salmoninarum (strain ATCC 33209 / DSM 20767 / JCM 11484 / NBRC 15589 / NCIMB 2235).